A 384-amino-acid polypeptide reads, in one-letter code: MTEGVGLPLWLLAELTYRCPLQCPYCSNPLDYAQHKNELTTQEWFDVFDQARQMGAVQLGFSGGEPLVRQDLEQLVAHAHQLGFYTNLITSGMGLTEQRISHLKQAGLDHIQISFQASDPVVNDALAGSKHAFEQKYEMCRLVKKYDYPMVLNFVIHRHNIDQIDKIIELCLELNADTVELAICQFYGWAFLNRQGLLPTQEQLIRAERITNEYREKLKAQNHPCKLIFVVPDYYEERPKACMNGWGKIFFTVAPDGMALPCHAARQLPISFPNVREQSLSRIWYESTGFNHFRGDAWMPEGCRSCPDKDRDFGGCRCQAYMLTGNASNADPVCGKSPYHQFIEQARAESEIDSSLEKLVFRNSRNSKQFTVQQNIPVQNIVDD.

Residues 5-220 (VGLPLWLLAE…TNEYREKLKA (216 aa)) form the Radical SAM core domain. [4Fe-4S] cluster is bound by residues Cys19, Cys23, and Cys26.

It belongs to the radical SAM superfamily. PqqE family. Interacts with PqqD. The interaction is necessary for activity of PqqE. [4Fe-4S] cluster serves as cofactor.

The catalysed reaction is [PQQ precursor protein] + S-adenosyl-L-methionine = E-Y cross-linked-[PQQ precursor protein] + 5'-deoxyadenosine + L-methionine + H(+). The protein operates within cofactor biosynthesis; pyrroloquinoline quinone biosynthesis. Catalyzes the cross-linking of a glutamate residue and a tyrosine residue in the PqqA protein as part of the biosynthesis of pyrroloquinoline quinone (PQQ). This is PqqA peptide cyclase from Acinetobacter baumannii (strain AB0057).